Consider the following 330-residue polypeptide: Peroxidase 70 (330 aa).

The signal sequence occupies residues 1–24 (MRSFTNLNPCYVLLPFFLVLATNA). Disulfide bonds link C43-C119, C76-C81, C125-C326, and C202-C234. The Proton acceptor role is filled by H74. 5 residues coordinate Ca(2+): D75, V78, G80, D82, and S84. P165 is a substrate binding site. H195 contributes to the heme b binding site. T196 contributes to the Ca(2+) binding site. 3 residues coordinate Ca(2+): D247, S250, and D255.

Belongs to the peroxidase family. Classical plant (class III) peroxidase subfamily. The cofactor is heme b. Requires Ca(2+) as cofactor.

It is found in the secreted. It carries out the reaction 2 a phenolic donor + H2O2 = 2 a phenolic radical donor + 2 H2O. Functionally, removal of H(2)O(2), oxidation of toxic reductants, biosynthesis and degradation of lignin, suberization, auxin catabolism, response to environmental stresses such as wounding, pathogen attack and oxidative stress. These functions might be dependent on each isozyme/isoform in each plant tissue. The polypeptide is Peroxidase 70 (PER70) (Arabidopsis thaliana (Mouse-ear cress)).